The chain runs to 428 residues: Enolase (428 aa).

Glutamine 163 is a (2R)-2-phosphoglycerate binding site. Glutamate 205 (proton donor) is an active-site residue. Mg(2+) contacts are provided by aspartate 242, glutamate 285, and aspartate 312. The (2R)-2-phosphoglycerate site is built by lysine 337, arginine 366, serine 367, and lysine 388. Lysine 337 acts as the Proton acceptor in catalysis.

The protein belongs to the enolase family. The cofactor is Mg(2+).

It is found in the cytoplasm. The protein localises to the secreted. The protein resides in the cell surface. It catalyses the reaction (2R)-2-phosphoglycerate = phosphoenolpyruvate + H2O. It functions in the pathway carbohydrate degradation; glycolysis; pyruvate from D-glyceraldehyde 3-phosphate: step 4/5. Catalyzes the reversible conversion of 2-phosphoglycerate (2-PG) into phosphoenolpyruvate (PEP). It is essential for the degradation of carbohydrates via glycolysis. The protein is Enolase of Neisseria meningitidis serogroup C (strain 053442).